The sequence spans 134 residues: uncharacterized protein (134 aa).

Transmembrane regions (helical) follow at residues 21-41, 52-72, and 95-115; these read FSTT…LYLI, LVLL…TPYE, and IVMA…VYII.

The protein resides in the host membrane. This is an uncharacterized protein from Acidianus two-tailed virus (ATV).